Reading from the N-terminus, the 80-residue chain is MVIIRLSRKGSKNKPFYQIVASDNRKPRDGKFIEKLGFFNPISIEKSKKIFIKTDRINLWMSKGAKLSDRVKNLLHKYKK.

Belongs to the bacterial ribosomal protein bS16 family.

This Wigglesworthia glossinidia brevipalpis protein is Small ribosomal subunit protein bS16.